Reading from the N-terminus, the 747-residue chain is Ferrichrome outer membrane transporter/phage receptor (747 aa).

The first 33 residues, 1 to 33, serve as a signal peptide directing secretion; sequence MARSKTAQPKHSLRKIAVVVATAVSGMSVYAQA. Residues 34–192 lie on the Periplasmic side of the membrane; it reads AVEPKEDTIT…NMVSKRPTTE (159 aa). The TonB box signature appears at 40-47; it reads DTITVTAA. The TBDR plug domain maps to 75-187; that stretch reads PIQKVPQSIS…PGGLLNMVSK (113 aa). Residues R114, Q133, and 148-149 each bind ferrichrome; that span reads FY. The TBDR beta-barrel domain maps to 192–747; sequence EPLKEVQFKA…QVVATATFRF (556 aa). Residues 193-201 traverse the membrane as a beta stranded segment; that stretch reads PLKEVQFKA. The Extracellular segment spans residues 202 to 206; sequence GTDSL. Residues 207–215 form a beta stranded membrane-spanning segment; it reads FQTGFDFSD. Topologically, residues 216-222 are periplasmic; that stretch reads SLDDDGV. The beta stranded transmembrane segment at 223-231 threads the bilayer; sequence YSYRLTGLA. Over 232-245 the chain is Extracellular; it reads RSANAQQKGSEEQR. A beta stranded transmembrane segment spans residues 246–255; sequence YAIAPAFTWR. Topologically, residues 256 to 259 are periplasmic; it reads PDDK. The chain crosses the membrane as a beta stranded span at residues 260–268; it reads TNFTFLSYF. Over 269–312 the chain is Extracellular; it reads QNEPETGYYGWLPKEGTVEPLPNGKRLPTDFNEGAKNNTYSRNE. Residue 277 to 279 coordinates ferrichrome; it reads YGW. The chain crosses the membrane as a beta stranded span at residues 313–321; sequence KMVGYSFDH. The Periplasmic portion of the chain corresponds to 322–326; the sequence is EFNDT. A beta stranded transmembrane segment spans residues 327-335; the sequence is FTVRQNLRF. At 336 to 387 the chain is on the extracellular side; it reads AENKTSQNSVYGYGVCSDPANAYSKQCAALAPADKGHYLARKYVVDDEKLQN. 346–348 serves as a coordination point for ferrichrome; it reads YGY. A disulfide bond links C351 and C362. The chain crosses the membrane as a beta stranded span at residues 388–396; that stretch reads FSVDTQLQS. Topologically, residues 397–404 are periplasmic; that stretch reads KFATGDID. A beta stranded transmembrane segment spans residues 405-413; sequence HTLLTGVDF. At 414–464 the chain is on the extracellular side; it reads MRMRNDINAWFGYDDSVPLLNLYNPVNTDFDFNAKDPANSGPYRILNKQKQ. F424 is a binding site for ferrichrome. A beta stranded transmembrane segment spans residues 465 to 473; that stretch reads TGVYVQDQA. The Periplasmic portion of the chain corresponds to 474–477; sequence QWDK. A beta stranded transmembrane segment spans residues 478–486; it reads VLVTLGGRY. The Extracellular portion of the chain corresponds to 487–508; the sequence is DWADQESLNRVAGTTDKRDDKQ. The chain crosses the membrane as a beta stranded span at residues 509 to 517; that stretch reads FTWRGGVNY. Over 518–522 the chain is Periplasmic; sequence LFDNG. Residues 523 to 531 traverse the membrane as a beta stranded segment; it reads VTPYFSYSE. At 532–551 the chain is on the extracellular side; the sequence is SFEPSSQVGKDGNIFAPSKG. Residues 552–560 form a beta stranded membrane-spanning segment; sequence KQYEVGVKY. Topologically, residues 561–565 are periplasmic; that stretch reads VPEDR. A beta stranded membrane pass occupies residues 566-574; it reads PIVVTGAVY. The Extracellular segment spans residues 575-601; it reads NLTKTNNLMADPEGSFFSVEGGEIRAR. The beta stranded transmembrane segment at 602 to 610 threads the bilayer; sequence GVEIEAKAA. Residues 611–613 lie on the Periplasmic side of the membrane; it reads LSA. Residues 614–622 traverse the membrane as a beta stranded segment; sequence SVNVVGSYT. At 623 to 645 the chain is on the extracellular side; sequence YTDAEYTTDTTYKGNTPAQVPKH. Residues 646–654 form a beta stranded membrane-spanning segment; it reads MASLWADYT. Over 655–661 the chain is Periplasmic; the sequence is FFDGPLS. Residues 662–670 traverse the membrane as a beta stranded segment; that stretch reads GLTLGTGGR. Topologically, residues 671–689 are extracellular; that stretch reads YTGSSYGDPANSFKVGSYT. The beta stranded transmembrane segment at 690 to 698 threads the bilayer; that stretch reads VVDALVRYD. The Periplasmic segment spans residues 699–705; it reads LARVGMA. The chain crosses the membrane as a beta stranded span at residues 706–714; that stretch reads GSNVALHVN. The Extracellular segment spans residues 715 to 737; that stretch reads NLFDREYVASCFNTYGCFWGAER. C725 and C731 are oxidised to a cystine. The TonB C-terminal box motif lies at 730–747; sequence GCFWGAERQVVATATFRF. A735 lines the ferrichrome pocket. Residues 738–746 traverse the membrane as a beta stranded segment; sequence QVVATATFR. A topological domain (periplasmic) is located at residue F747.

Belongs to the TonB-dependent receptor family. Monomer. Interacts with TonB. Interacts with Escherichia phage T5 receptor-binding protein pb5 (RBP-pb5); this interaction is necessary for the entry of the viral genome into the host cell.

The protein resides in the cell outer membrane. With respect to regulation, binding of ferrichrome or colicin M enhances the interaction between FhuA and TonB. TonB activates FhuA through interaction with the beta-barrel. Involved in the uptake of iron in complex with ferrichrome, a hydroxamate-type siderophore. Binds and transports ferrichrome-iron across the outer membrane. In addition to its role in ferrichrome-iron transport, transports the antibiotic albomycin, which is a structural analog of ferrichrome, and acts as a receptor for colicin M, microcin J25 and bacteriophages T1, T5, phi80 and UC-1. The energy source, which is required for all FhuA functions except infection by phage T5, is provided by the inner membrane TonB system. This chain is Ferrichrome outer membrane transporter/phage receptor, found in Escherichia coli (strain K12).